Reading from the N-terminus, the 381-residue chain is Chitin deacetylase 8 (381 aa).

The first 18 residues, 1–18, serve as a signal peptide directing secretion; that stretch reads MKRLSVLCSLLLVAAALG. 2 cysteine pairs are disulfide-bonded: cysteine 27–cysteine 39 and cysteine 32–cysteine 37. Residues aspartate 63, histidine 117, and histidine 121 each coordinate Zn(2+). 5 disulfides stabilise this stretch: cysteine 86–cysteine 335, cysteine 211–cysteine 216, cysteine 240–cysteine 246, cysteine 343–cysteine 365, and cysteine 348–cysteine 368. N-linked (GlcNAc...) asparagine glycosylation is present at asparagine 171.

The protein belongs to the carbohydrate esterase 4 (CE4) family. Zn(2+) is required as a cofactor. Strongly expressed in the midgut. Has little or no expression in other tissues tested.

Its subcellular location is the secreted. The enzyme catalyses [(1-&gt;4)-N-acetyl-beta-D-glucosaminyl](n) + n H2O = chitosan + n acetate. In terms of biological role, hydrolyzes the N-acetamido groups of N-acetyl-D-glucosamine (GlcNAc) residues in chitin. Shows activity towards the chitinous oligomers GlcNAc(3), GlcNAc(4), GlcNAc(5) and GlcNAc(6), but not GlcNAc or GlcNAc(2). Requires the substrate to occupy subsites 0, +1, and +2 for optimum catalysis. The polypeptide is Chitin deacetylase 8 (Bombyx mori (Silk moth)).